The sequence spans 951 residues: Pentatricopeptide repeat-containing protein At4g19220, mitochondrial (951 aa).

The N-terminal 63 residues, 1 to 63 (MLLVMVRSST…RHFTSSVLSP (63 aa)), are a transit peptide targeting the mitochondrion. 22 PPR repeats span residues 121-151 (DLATSSKLLTFYGRTGELVSSSCLFDELKEK), 152-186 (DVIVWNSMITALNQNGRYIAAVGLFIEMIHKGNEF), 187-221 (DSTTLLLAASALSSLHLSRKCSMLHCLAIETGLVG), 222-252 (DSSLCNALMNLYAKGENLSSAECVFTHMEHR), 253-287 (DIVSWNTIMTKCLANGHPRKSLQYFKSMTGSGQEA), 288-322 (DTVTFSCVISACSSIEELTLGESLHGLVIKSGYSP), 325-355 (HVSVGNSIISMYSKCGDTEAAETVFEELVCR), 356-386 (DVISSNAILNGFAANGMFEEAFGILNQMQSV), 392-426 (DIATVVSITSICGDLSFSREGRAVHGYTVRMEMQS), 428-458 (ALEVINSVIDMYGKCGLTTQAELLFKTTTHR), 459-489 (DLVSWNSMISAFSQNGFTHKAKNLFKEVVSE), 496-530 (SLSTVLAILTSCDSSDSLIFGKSVHCWLQKLGFGD), 531-561 (NMLSANSVINMYIGCRDLTSAFLRLETMSET), 563-597 (DLTSWNSVISGCASSGHHLESLRAFQAMSREGKIR), 599-629 (DLITLLGTISASGNLGLVLQGRCFHGLAIKS), 634-668 (DTQLQNTLITMYGRCKDIESAVKVFGLISDPNLCS), 669-695 (WNCVISALSQNKAGREVFQLFRNLKLE), 697-731 (NEITFVGLLSASTQLGSTSYGMQAHCHLIRRGFQA), 732-762 (NPFVSAALVDMYSSCGMLETGMKVFRNSGVN), 763-793 (SISAWNSVISAHGFHGMGEKAMELFKELSSN), 799-829 (NKSSFISLLSACSHSGFIDEGLSYYKQMEEK), and 835-865 (VTEHRVWIVDMLGRAGKLREAYEFITGIGEP). Positions 870–945 (VWGALLSACN…LPGYSVIDVR (76 aa)) are type E motif.

It belongs to the PPR family. PCMP-E subfamily.

Its subcellular location is the mitochondrion. The polypeptide is Pentatricopeptide repeat-containing protein At4g19220, mitochondrial (PCMP-E2) (Arabidopsis thaliana (Mouse-ear cress)).